Reading from the N-terminus, the 110-residue chain is UPF0060 membrane protein Psyr_3752 (110 aa).

4 consecutive transmembrane segments (helical) span residues 5–25 (LWFF…WLWL), 28–48 (GKSA…ALLL), 59–79 (AYAA…GLVE), and 84–104 (LGTD…ILLG).

This sequence belongs to the UPF0060 family.

The protein localises to the cell inner membrane. The chain is UPF0060 membrane protein Psyr_3752 from Pseudomonas syringae pv. syringae (strain B728a).